A 333-amino-acid chain; its full sequence is Global transcription regulator sge1 (333 aa).

2 disordered regions span residues proline 93–proline 139 and glutamine 241–glutamine 307.

The protein belongs to the MIT1/WOR1 family.

It localises to the nucleus. Global transcriptional regulator that acts as an activator of secondary metabolism. Required for expression of a yet uncharacterized secondary metabolism gene cluster containing a non-canonical non-ribosomal peptide synthetase. Not required for conidiogenesis nor for pathogenicity, but is involved in vegetative growth. In Gibberella fujikuroi (strain CBS 195.34 / IMI 58289 / NRRL A-6831) (Bakanae and foot rot disease fungus), this protein is Global transcription regulator sge1.